The chain runs to 206 residues: Large ribosomal subunit protein uL4 (206 aa).

Residues 47–94 (NRAQKGRSEIAKSTRKPFRQKGTGNARAGMASSPLWRGGGKIFPNSPD) are disordered.

Belongs to the universal ribosomal protein uL4 family. As to quaternary structure, part of the 50S ribosomal subunit.

One of the primary rRNA binding proteins, this protein initially binds near the 5'-end of the 23S rRNA. It is important during the early stages of 50S assembly. It makes multiple contacts with different domains of the 23S rRNA in the assembled 50S subunit and ribosome. Functionally, forms part of the polypeptide exit tunnel. The chain is Large ribosomal subunit protein uL4 from Azoarcus sp. (strain BH72).